The following is a 598-amino-acid chain: Elongation factor 4 (598 aa).

Residues 2–184 (TKIRNFSIIA…AVVDRIPPPS (183 aa)) enclose the tr-type G domain. Residues 14 to 19 (DHGKST) and 131 to 134 (NKID) contribute to the GTP site.

Belongs to the TRAFAC class translation factor GTPase superfamily. Classic translation factor GTPase family. LepA subfamily.

The protein resides in the cell inner membrane. It carries out the reaction GTP + H2O = GDP + phosphate + H(+). Its function is as follows. Required for accurate and efficient protein synthesis under certain stress conditions. May act as a fidelity factor of the translation reaction, by catalyzing a one-codon backward translocation of tRNAs on improperly translocated ribosomes. Back-translocation proceeds from a post-translocation (POST) complex to a pre-translocation (PRE) complex, thus giving elongation factor G a second chance to translocate the tRNAs correctly. Binds to ribosomes in a GTP-dependent manner. In Syntrophobacter fumaroxidans (strain DSM 10017 / MPOB), this protein is Elongation factor 4.